Consider the following 936-residue polypeptide: Phosphoenolpyruvate carboxylase (936 aa).

Residues 1–20 (MSSLNLSAGPEPVSERPDDA) form a disordered region. Residues His-164 and Lys-598 contribute to the active site.

This sequence belongs to the PEPCase type 1 family. Mg(2+) is required as a cofactor.

It catalyses the reaction oxaloacetate + phosphate = phosphoenolpyruvate + hydrogencarbonate. Its function is as follows. Forms oxaloacetate, a four-carbon dicarboxylic acid source for the tricarboxylic acid cycle. The protein is Phosphoenolpyruvate carboxylase (ppc) of Rhodopseudomonas palustris (strain ATCC BAA-98 / CGA009).